The primary structure comprises 357 residues: DNA replication and repair protein RecF (357 aa).

30 to 37 is a binding site for ATP; that stretch reads GANGSGKT.

It belongs to the RecF family.

It localises to the cytoplasm. Its function is as follows. The RecF protein is involved in DNA metabolism; it is required for DNA replication and normal SOS inducibility. RecF binds preferentially to single-stranded, linear DNA. It also seems to bind ATP. The sequence is that of DNA replication and repair protein RecF from Cronobacter sakazakii (strain ATCC BAA-894) (Enterobacter sakazakii).